The chain runs to 399 residues: Dual-specificity RNA methyltransferase RlmN (399 aa).

The Proton acceptor role is filled by glutamate 122. One can recognise a Radical SAM core domain in the interval 128–371; it reads ETDRGTLCVS…VRTPRGRDIL (244 aa). The cysteines at positions 135 and 374 are disulfide-linked. Residues cysteine 142, cysteine 146, and cysteine 149 each coordinate [4Fe-4S] cluster. S-adenosyl-L-methionine contacts are provided by residues 200–201, serine 232, 254–256, and asparagine 331; these read GE and SLH. The active-site S-methylcysteine intermediate is the cysteine 374.

The protein belongs to the radical SAM superfamily. RlmN family. The cofactor is [4Fe-4S] cluster.

It is found in the cytoplasm. The catalysed reaction is adenosine(2503) in 23S rRNA + 2 reduced [2Fe-2S]-[ferredoxin] + 2 S-adenosyl-L-methionine = 2-methyladenosine(2503) in 23S rRNA + 5'-deoxyadenosine + L-methionine + 2 oxidized [2Fe-2S]-[ferredoxin] + S-adenosyl-L-homocysteine. It catalyses the reaction adenosine(37) in tRNA + 2 reduced [2Fe-2S]-[ferredoxin] + 2 S-adenosyl-L-methionine = 2-methyladenosine(37) in tRNA + 5'-deoxyadenosine + L-methionine + 2 oxidized [2Fe-2S]-[ferredoxin] + S-adenosyl-L-homocysteine. Specifically methylates position 2 of adenine 2503 in 23S rRNA and position 2 of adenine 37 in tRNAs. m2A2503 modification seems to play a crucial role in the proofreading step occurring at the peptidyl transferase center and thus would serve to optimize ribosomal fidelity. This is Dual-specificity RNA methyltransferase RlmN from Rhodopseudomonas palustris (strain BisB18).